The primary structure comprises 447 residues: Phosphoglucosamine mutase (447 aa).

Serine 103 (phosphoserine intermediate) is an active-site residue. Mg(2+)-binding residues include serine 103, aspartate 242, aspartate 244, and aspartate 246. Serine 103 is modified (phosphoserine).

This sequence belongs to the phosphohexose mutase family. It depends on Mg(2+) as a cofactor. Activated by phosphorylation.

It carries out the reaction alpha-D-glucosamine 1-phosphate = D-glucosamine 6-phosphate. In terms of biological role, catalyzes the conversion of glucosamine-6-phosphate to glucosamine-1-phosphate. This is Phosphoglucosamine mutase from Dinoroseobacter shibae (strain DSM 16493 / NCIMB 14021 / DFL 12).